We begin with the raw amino-acid sequence, 279 residues long: MKIIVAKNVGFCFGVERAIRTVENLLNEGKRVVTDGEIVHNRQVMEDLLKKGLKISSDPTDGDVFVVRAHGIPEEKLEKLRKIYPEVVDLTCPIVFQLFRTAREYSSRGKLIVFGKRDHPEMVALMGYAPAIVTKKPFKTEEKNVVFLSQTTSSLDEYREFVSEMIKMNNFEKAIYLNTICPVTVEREREVKELSKICDLSVVVGGKHSSNTGKLFRLASRNSRAIWVESPDEIPEDVVKYGTVCVFSGTSTPVSLIENVVRKLEEMEGKYYGTNGIQR.

A [4Fe-4S] cluster-binding site is contributed by cysteine 12. (2E)-4-hydroxy-3-methylbut-2-enyl diphosphate-binding residues include histidine 40 and histidine 70. Residues histidine 40 and histidine 70 each contribute to the dimethylallyl diphosphate site. Isopentenyl diphosphate contacts are provided by histidine 40 and histidine 70. Cysteine 92 contacts [4Fe-4S] cluster. (2E)-4-hydroxy-3-methylbut-2-enyl diphosphate is bound at residue histidine 119. Histidine 119 provides a ligand contact to dimethylallyl diphosphate. Histidine 119 contributes to the isopentenyl diphosphate binding site. Glutamate 121 (proton donor) is an active-site residue. Threonine 151 is a (2E)-4-hydroxy-3-methylbut-2-enyl diphosphate binding site. Residue cysteine 181 participates in [4Fe-4S] cluster binding. Residues serine 209, serine 210, asparagine 211, and serine 251 each contribute to the (2E)-4-hydroxy-3-methylbut-2-enyl diphosphate site. 4 residues coordinate dimethylallyl diphosphate: serine 209, serine 210, asparagine 211, and serine 251. Residues serine 209, serine 210, asparagine 211, and serine 251 each coordinate isopentenyl diphosphate.

It belongs to the IspH family. It depends on [4Fe-4S] cluster as a cofactor.

It carries out the reaction isopentenyl diphosphate + 2 oxidized [2Fe-2S]-[ferredoxin] + H2O = (2E)-4-hydroxy-3-methylbut-2-enyl diphosphate + 2 reduced [2Fe-2S]-[ferredoxin] + 2 H(+). The catalysed reaction is dimethylallyl diphosphate + 2 oxidized [2Fe-2S]-[ferredoxin] + H2O = (2E)-4-hydroxy-3-methylbut-2-enyl diphosphate + 2 reduced [2Fe-2S]-[ferredoxin] + 2 H(+). It functions in the pathway isoprenoid biosynthesis; dimethylallyl diphosphate biosynthesis; dimethylallyl diphosphate from (2E)-4-hydroxy-3-methylbutenyl diphosphate: step 1/1. The protein operates within isoprenoid biosynthesis; isopentenyl diphosphate biosynthesis via DXP pathway; isopentenyl diphosphate from 1-deoxy-D-xylulose 5-phosphate: step 6/6. Functionally, catalyzes the conversion of 1-hydroxy-2-methyl-2-(E)-butenyl 4-diphosphate (HMBPP) into a mixture of isopentenyl diphosphate (IPP) and dimethylallyl diphosphate (DMAPP). Acts in the terminal step of the DOXP/MEP pathway for isoprenoid precursor biosynthesis. The sequence is that of 4-hydroxy-3-methylbut-2-enyl diphosphate reductase from Thermotoga neapolitana (strain ATCC 49049 / DSM 4359 / NBRC 107923 / NS-E).